Reading from the N-terminus, the 1010-residue chain is 2-oxoglutarate dehydrogenase-like, mitochondrial (1010 aa).

The N-terminal 73 residues, 1–73, are a transit peptide targeting the mitochondrion; the sequence is MSQLRLLPSR…RSVHKSWDSF (73 aa). The Ca(2+) site is built by histidine 130, aspartate 143, and aspartate 145. Thiamine diphosphate is bound by residues arginine 299, aspartate 398, asparagine 431, isoleucine 433, and glutamine 663. Residues aspartate 398, asparagine 431, and isoleucine 433 each coordinate Mg(2+).

It belongs to the alpha-ketoglutarate dehydrogenase family. In terms of assembly, the OGDHC complex comprises multiple copies of three catalytic enzyme components, the 2-oxoglutarate dehydrogenase (OGDH/E1), the dihydrolipoamide dehydrogenase (DLST/E2) and the dihydrolipoamide dehydrogenase (DLD/E3). OGDHL/E1-like isoenzyme may replace OGDH in the OGDHC complex in the brain. The presence of either ODGH/E1 or ODGHL/E1-like isoenzyme in the complex may depend on its tissular distribution. Thiamine diphosphate is required as a cofactor. The cofactor is Mg(2+).

It localises to the mitochondrion matrix. It carries out the reaction N(6)-[(R)-lipoyl]-L-lysyl-[protein] + 2-oxoglutarate + H(+) = N(6)-[(R)-S(8)-succinyldihydrolipoyl]-L-lysyl-[protein] + CO2. 2-oxoglutarate dehydrogenase (E1-like) component of the 2-oxoglutarate dehydrogenase multienzyme complex (OGDHC) which mediates the decarboxylation of alpha-ketoglutarate in the tricarboxylic acid cycle. The OGDHC complex catalyzes the overall conversion of 2-oxoglutarate to succinyl-CoA and CO(2) while reducing NAD(+) to NADH. The OGDHC complex is mainly active in the mitochondrion. Involved in the inhibition of cell proliferation and in apoptosis. In Pongo abelii (Sumatran orangutan), this protein is 2-oxoglutarate dehydrogenase-like, mitochondrial (OGDHL).